Reading from the N-terminus, the 230-residue chain is Cytidylate kinase (230 aa).

12–20 contacts ATP; it reads GPSGAGKGT.

This sequence belongs to the cytidylate kinase family. Type 1 subfamily.

It is found in the cytoplasm. It carries out the reaction CMP + ATP = CDP + ADP. The enzyme catalyses dCMP + ATP = dCDP + ADP. The chain is Cytidylate kinase from Shewanella sp. (strain W3-18-1).